Here is a 313-residue protein sequence, read N- to C-terminus: Ribosomal RNA small subunit methyltransferase H (313 aa).

S-adenosyl-L-methionine-binding positions include 35–37 (GGH), D55, F80, D102, and Q109.

This sequence belongs to the methyltransferase superfamily. RsmH family.

The protein localises to the cytoplasm. The catalysed reaction is cytidine(1402) in 16S rRNA + S-adenosyl-L-methionine = N(4)-methylcytidine(1402) in 16S rRNA + S-adenosyl-L-homocysteine + H(+). Functionally, specifically methylates the N4 position of cytidine in position 1402 (C1402) of 16S rRNA. The polypeptide is Ribosomal RNA small subunit methyltransferase H (Shewanella sp. (strain MR-7)).